Here is an 892-residue protein sequence, read N- to C-terminus: Translation initiation factor IF-2 (892 aa).

The interval 88–305 (KKRTFVKRDP…SLQQGFQKPA (218 aa)) is disordered. Composition is skewed to basic and acidic residues over residues 93 to 159 (VKRD…KDKV) and 166 to 216 (DMTK…EENK). Basic residues predominate over residues 254–269 (GRGRNAKAARPAKKGK). Over residues 270-282 (HAESKADREEARA) the composition is skewed to basic and acidic residues. A tr-type G domain is found at 391–560 (PRAPVVTIMG…LLQAEVLELK (170 aa)). The G1 stretch occupies residues 400–407 (GHVDHGKT). 400–407 (GHVDHGKT) is a GTP binding site. The tract at residues 425–429 (GITQH) is G2. Residues 446–449 (DTPG) form a G3 region. GTP is bound by residues 446 to 450 (DTPGH) and 500 to 503 (NKID). The segment at 500-503 (NKID) is G4. Residues 536-538 (SAK) are G5.

Belongs to the TRAFAC class translation factor GTPase superfamily. Classic translation factor GTPase family. IF-2 subfamily.

It is found in the cytoplasm. Its function is as follows. One of the essential components for the initiation of protein synthesis. Protects formylmethionyl-tRNA from spontaneous hydrolysis and promotes its binding to the 30S ribosomal subunits. Also involved in the hydrolysis of GTP during the formation of the 70S ribosomal complex. The protein is Translation initiation factor IF-2 of Salmonella agona (strain SL483).